The sequence spans 738 residues: Melanotransferrin (738 aa).

An N-terminal signal peptide occupies residues 1 to 19 (MRGPSGALWLLLALRTVLG). The tract at residues 20 to 30 (GMEVRWCATSD) is antigenic epitope. 2 Transferrin-like domains span residues 23-357 (VRWC…GLLC) and 366-706 (LRWC…GMSS). 2 disulfides stabilise this stretch: C26–C63 and C36–C54. N38 carries N-linked (GlcNAc...) asparagine glycosylation. Residues D78 and Y107 each contribute to the Fe(3+) site. Cystine bridges form between C130/C216, C172/C189, C186/C199, and C257/C271. Position 132 (T132) interacts with hydrogencarbonate. The N-linked (GlcNAc...) asparagine glycan is linked to N135. Residues R136, V138, and G139 each coordinate hydrogencarbonate. Residue Y210 coordinates Fe(3+). H279, S421, and Y451 together coordinate Fe(3+). Position 462 is a phosphoserine; by FAM20C (S462). N-linked (GlcNAc...) asparagine glycosylation occurs at N515. Residues Y556 and H625 each contribute to the Fe(3+) site. A lipid anchor (GPI-anchor amidated cysteine) is attached at C709. Residues 710–738 (SGAAAPAPGAPLLPLLLPALAARLLPPAL) constitute a propeptide, removed in mature form.

Belongs to the transferrin family. As to expression, found predominantly in human melanomas and in certain fetal tissues; also found in liver, epithelium, umbilical chord, placenta and sweat gland ducts.

Its subcellular location is the cell membrane. Involved in iron cellular uptake. Seems to be internalized and then recycled back to the cell membrane. Binds a single atom of iron per subunit. Could also bind zinc. This is Melanotransferrin from Homo sapiens (Human).